The primary structure comprises 101 residues: NAD(P)H-quinone oxidoreductase subunit 4L, chloroplastic (101 aa).

The next 3 helical transmembrane spans lie at 2 to 22 (MLEH…YGLI), 32 to 52 (MCLE…SDFF), and 61 to 81 (IFSI…PAIV).

The protein belongs to the complex I subunit 4L family. NDH is composed of at least 16 different subunits, 5 of which are encoded in the nucleus.

Its subcellular location is the plastid. The protein resides in the chloroplast thylakoid membrane. It carries out the reaction a plastoquinone + NADH + (n+1) H(+)(in) = a plastoquinol + NAD(+) + n H(+)(out). The catalysed reaction is a plastoquinone + NADPH + (n+1) H(+)(in) = a plastoquinol + NADP(+) + n H(+)(out). Its function is as follows. NDH shuttles electrons from NAD(P)H:plastoquinone, via FMN and iron-sulfur (Fe-S) centers, to quinones in the photosynthetic chain and possibly in a chloroplast respiratory chain. The immediate electron acceptor for the enzyme in this species is believed to be plastoquinone. Couples the redox reaction to proton translocation, and thus conserves the redox energy in a proton gradient. The polypeptide is NAD(P)H-quinone oxidoreductase subunit 4L, chloroplastic (Fagopyrum esculentum subsp. ancestrale (Wild buckwheat)).